Consider the following 944-residue polypeptide: Translation initiation factor IF-2 (944 aa).

Disordered stretches follow at residues 61 to 157 and 173 to 281; these read IQAN…KAKQ and TQSN…SHKI. Residues 132–150 are compositionally biased toward polar residues; sequence TFENQTPPTENTPKVVSHS. The span at 175 to 185 shows a compositional bias: low complexity; sequence SNANNASNANN. The span at 186–203 shows a compositional bias: basic and acidic residues; sequence AKKEISEVKKQEQEIKRH. The segment covering 204 to 215 has biased composition (basic residues); the sequence is ENIKRRTGFRVI. Residues 244–259 show a composition bias toward basic and acidic residues; sequence EDIKKEWQEKDKQEAK. Residues 443 to 612 form the tr-type G domain; sequence ERPPVVTIMG…LIQAGIMELK (170 aa). The G1 stretch occupies residues 452-459; the sequence is GHVDHGKT. 452–459 is a binding site for GTP; the sequence is GHVDHGKT. Positions 477–481 are G2; that stretch reads GITQH. The G3 stretch occupies residues 498-501; the sequence is DTPG. GTP-binding positions include 498 to 502 and 552 to 555; these read DTPGH and NKMD. Positions 552-555 are G4; it reads NKMD. The tract at residues 588–590 is G5; the sequence is SAK.

Belongs to the TRAFAC class translation factor GTPase superfamily. Classic translation factor GTPase family. IF-2 subfamily.

The protein localises to the cytoplasm. In terms of biological role, one of the essential components for the initiation of protein synthesis. Protects formylmethionyl-tRNA from spontaneous hydrolysis and promotes its binding to the 30S ribosomal subunits. Also involved in the hydrolysis of GTP during the formation of the 70S ribosomal complex. The chain is Translation initiation factor IF-2 (infB) from Helicobacter pylori (strain ATCC 700392 / 26695) (Campylobacter pylori).